Here is an 80-residue protein sequence, read N- to C-terminus: CLAVATA3/ESR (CLE)-related protein 4 (80 aa).

A signal peptide spans 1–22 (MASFKLWVCLILLLLEFSVHQC). Positions 55–80 (SKDGQTVLGTLDSKRLSPGGPDPRHH) are disordered. A hydroxyproline mark is found at proline 72 and proline 75. O-linked (Ara...) hydroxyproline glycosylation is present at proline 75.

Belongs to the CLV3/ESR signal peptide family. Post-translationally, the O-glycosylation (arabinosylation) of the hydroxyproline Pro-75 enhances binding affinity of the CLE4p peptide for its receptor. Expressed in roots and seedlings.

Its subcellular location is the secreted. It localises to the extracellular space. Extracellular signal peptide that regulates cell fate. The sequence is that of CLAVATA3/ESR (CLE)-related protein 4 from Arabidopsis thaliana (Mouse-ear cress).